A 158-amino-acid chain; its full sequence is NADH-quinone oxidoreductase subunit B (158 aa).

4 residues coordinate [4Fe-4S] cluster: C36, C37, C101, and C131.

It belongs to the complex I 20 kDa subunit family. In terms of assembly, NDH-1 is composed of 14 different subunits. Subunits NuoB, C, D, E, F, and G constitute the peripheral sector of the complex. Requires [4Fe-4S] cluster as cofactor.

It is found in the cell inner membrane. The catalysed reaction is a quinone + NADH + 5 H(+)(in) = a quinol + NAD(+) + 4 H(+)(out). Functionally, NDH-1 shuttles electrons from NADH, via FMN and iron-sulfur (Fe-S) centers, to quinones in the respiratory chain. The immediate electron acceptor for the enzyme in this species is believed to be ubiquinone. Couples the redox reaction to proton translocation (for every two electrons transferred, four hydrogen ions are translocated across the cytoplasmic membrane), and thus conserves the redox energy in a proton gradient. The polypeptide is NADH-quinone oxidoreductase subunit B (Francisella philomiragia subsp. philomiragia (strain ATCC 25017 / CCUG 19701 / FSC 153 / O#319-036)).